Here is a 572-residue protein sequence, read N- to C-terminus: Mitochondrial distribution and morphology protein 34 (572 aa).

One can recognise an SMP-LTD domain in the interval 1-195 (MAFNFNWSPL…LPAIIHRLSL (195 aa)). 4 disordered regions span residues 212–236 (TASA…VDAL), 321–426 (VGSM…PDND), 477–522 (SATP…DNPT), and 553–572 (CGPF…AYGH). The span at 330–348 (SASMVSSQSRSSTPSHTFS) shows a compositional bias: low complexity. The segment covering 358 to 370 (RHSKAHARKRKKR) has biased composition (basic residues). Over residues 371 to 381 (VVDLRRPKTTD) the composition is skewed to basic and acidic residues. Polar residues-rich tracts occupy residues 387 to 400 (SDES…SAPS) and 500 to 511 (DSSAGSSRQLPS).

The protein belongs to the MDM34 family. As to quaternary structure, component of the ER-mitochondria encounter structure (ERMES) or MDM complex, composed of mmm1, mdm10, mdm12 and mdm34.

It is found in the mitochondrion outer membrane. Functionally, component of the ERMES/MDM complex, which serves as a molecular tether to connect the endoplasmic reticulum (ER) and mitochondria. Components of this complex are involved in the control of mitochondrial shape and protein biogenesis, and function in nonvesicular lipid trafficking between the ER and mitochondria. Mdm34 is required for the interaction of the ER-resident membrane protein mmm1 and the outer mitochondrial membrane-resident beta-barrel protein mdm10. This is Mitochondrial distribution and morphology protein 34 from Aspergillus fumigatus (strain CBS 144.89 / FGSC A1163 / CEA10) (Neosartorya fumigata).